The chain runs to 202 residues: FMN-dependent NADH:quinone oxidoreductase (202 aa).

FMN-binding positions include Ser12 and 21–23 (SFS).

The protein belongs to the azoreductase type 1 family. As to quaternary structure, homodimer. FMN is required as a cofactor.

The enzyme catalyses 2 a quinone + NADH + H(+) = 2 a 1,4-benzosemiquinone + NAD(+). It catalyses the reaction N,N-dimethyl-1,4-phenylenediamine + anthranilate + 2 NAD(+) = 2-(4-dimethylaminophenyl)diazenylbenzoate + 2 NADH + 2 H(+). Its function is as follows. Quinone reductase that provides resistance to thiol-specific stress caused by electrophilic quinones. Also exhibits azoreductase activity. Catalyzes the reductive cleavage of the azo bond in aromatic azo compounds to the corresponding amines. The sequence is that of FMN-dependent NADH:quinone oxidoreductase from Mycoplasma mobile (strain ATCC 43663 / 163K / NCTC 11711) (Mesomycoplasma mobile).